A 210-amino-acid polypeptide reads, in one-letter code: Fimbriae Z protein (210 aa).

The region spanning 5–121 (SVIIMDEHPI…DIYNAVKMIL (117 aa)) is the Response regulatory domain. Aspartate 56 is subject to 4-aspartylphosphate. Positions 143–208 (GGHHDMPLSN…ELIDYAKSHE (66 aa)) constitute an HTH luxR-type domain. The H-T-H motif DNA-binding region spans 167 to 186 (NKEIAEQLLLSNKTISAHKA).

Its subcellular location is the cytoplasm. This chain is Fimbriae Z protein (fimZ), found in Salmonella typhimurium (strain LT2 / SGSC1412 / ATCC 700720).